The chain runs to 282 residues: MKTETTIQGLAASLNPARAARKIIGFVPTMGNLHEGHLTLVREAKKLCDVVVVSIFVNPTQFGPGEDFDNYPRTLEQDSRLLADVGCDIIFAPSVEQMYGTQPRLTNISVSQITDDLCGSSRPGHFDGVALVVTKLFNIVQPNYAFFGQKDYQQLAVIRQFVQDLNIPLEVIGVPIVRAEDGLALSSRNGYLTPEQRQVAPVIYQGLKQAEEQLHQGKDLQQVLADLKTLLTDNGFVVDYVEARQPNLLAASQFDRDIVLFVAAKLGGTRLIDNLQVAFTPQ.

30–37 contacts ATP; it reads MGNLHEGH. The Proton donor role is filled by His-37. Position 61 (Gln-61) interacts with (R)-pantoate. Gln-61 contacts beta-alanine. ATP is bound at residue 148–151; it reads GQKD. Gln-154 contacts (R)-pantoate. Residues Val-177 and 185 to 188 contribute to the ATP site; that span reads LSSR.

Belongs to the pantothenate synthetase family. In terms of assembly, homodimer.

The protein localises to the cytoplasm. The enzyme catalyses (R)-pantoate + beta-alanine + ATP = (R)-pantothenate + AMP + diphosphate + H(+). Its pathway is cofactor biosynthesis; (R)-pantothenate biosynthesis; (R)-pantothenate from (R)-pantoate and beta-alanine: step 1/1. Functionally, catalyzes the condensation of pantoate with beta-alanine in an ATP-dependent reaction via a pantoyl-adenylate intermediate. In Acinetobacter baumannii (strain AB0057), this protein is Pantothenate synthetase.